The chain runs to 173 residues: dCTP deaminase (173 aa).

DCTP is bound by residues Arg-97 to Arg-102 and Asp-113. The Proton donor/acceptor role is filled by Glu-123. DCTP-binding residues include Tyr-155 and Gln-162.

It belongs to the dCTP deaminase family. In terms of assembly, homotrimer.

It carries out the reaction dCTP + H2O + H(+) = dUTP + NH4(+). The protein operates within pyrimidine metabolism; dUMP biosynthesis; dUMP from dCTP (dUTP route): step 1/2. Catalyzes the deamination of dCTP to dUTP. The protein is dCTP deaminase of Acidianus ambivalens (Desulfurolobus ambivalens).